The sequence spans 1537 residues: MAEQISLVDVSSSVSLRGEDSSNVALLRDVFLPDVAASDPAESSVDVQDEHSSDDSDNENEVFPKQNDFSQRRRIQNAQFEALLSKCTDADSNEAFDRAPIALSDGELSIAHLVKKQDLGNGMLDPREYQIELFERAKTQNTIAVLDTGSGKTLIAVLLLRHTILNELDDRANGKTHRVSFFLVDSVTLAYQQAAVLRNNIDQNVAHFFGAMGTDLWDKRTWDKHLQRNMVIVCTAEILNQCLLNSYVRMDQINLLIFDEAHHAKKDHPYARIIRDSYFKAQPSQRPRVFGMTASPIDTKGDITEAATRLETFLDSRIATTSKITLLREVVSRPIEKVWAYNRLEPPFATELYKLMDTRYGNIKVLEGVYRFAWNASSELGKWCSDRAWWHALADDVLPKLEGNINKLIESNTMKAEHGAVFKDIIRIREASETVKNYFFTDPELPGELSPKVQRLRMELSKHFNDTTGTKCIVFTQKRYTAKILNELFTVLNIPNLRPGVLIGVRPGDIGGMNITFRQQFLALVKFRTGEINCLFATSVAEEGLDIPDCNLVIRFDLYRTLIQYVQSRGRARHCTSTYAIMVEKDNAEHEGRLKEIREAENIMRRFCEILPEDRILHGNDHDLDSFLQEEEGRRTFTVKSTGAKLTYHSAIAILARYASSLQYEKETVPQVTYVVTIASNAYVCEVILPEKSPIRGLTGSPAMRKAVAKRSAAFDTCLLLRKNRLLDGYFNSIYHRRLPAMRNAKLAITCKRTNAYDMLLKPSIWAKQRTTPTETFYGIHMSLLPSKPLSRDHRPILLLTREKLPEFPAFSIYLDEDVETKVLSYPLKHGLQISVDKLQSLTVFTLRIFRDIFHKVYEHEVQKMPYWLAPAEAIDGRGSGKNPRDCIDWDTVSFVHNNDEITFTRNLNPESLVNRFIFDNWDGRFRYFTVAVADTLQPSDPPPPSVPRRRYMNNIMNYTLSLSKNSRARFLSSCDWNQPVLQAELVRLRRNLLDKMTTQEKEMQTECFICAEPLRISALPPSIVSTCLAFPAIISRLDSYLIALEACDELELVIRPDFALEAFTKDSDNTEEHRGQQIHFQRGMGKNYERLEFLGDCFLKMATSIALFSQNPNDDEFDYHVNRMCLICNKNLFNTAIKKQIYRYIRSRGFSRHIWYPDGLTLLHGKDHSTKLLSEGKHALGEKTIADVCEALIGASLLSGGPEHRFDMATKAVSALVDSPSHRVSCWKEYITLYTLPKYQTEKHRGSEDDLARHVEEELGYHFTYPRLLASAITHPSLPSTWGYRVPCYQRLEFLGDSLLDMVCVEDLFRRFPDRDPQWLSEHKMAMVSNKFLGALSVKLGFHRRIMAFSNPLQAQITHYVEEIETAQAESQGAVDYWVVAKDPPKCLPDMVEAYLGAIFVDSKFDFQVIEAFFERQIKPFFEDMSIYDTFANKHPTTFLHNKLTNEYGCTNYCLKAGELPTIDGAPATVLAAVIVHGNVISEARSSSSRYAKITASEKALAVLDGLLPSEFCQKYRCDCKETKNSSSVVEIGTAI.

A disordered region spans residues Ser38–Asp68. Residues Leu133–Leu314 enclose the Helicase ATP-binding domain. Residue Leu146–Thr153 participates in ATP binding. The DEAH box signature appears at Asp259 to His262. The region spanning Glu459–His618 is the Helicase C-terminal domain. The Dicer dsRNA-binding fold domain maps to Ala651–Ala741. Residues Asp891–Ala1019 form the PAZ domain. 2 RNase III domains span residues Ile1043 to Gly1202 and Ala1253 to Lys1405. Residues Glu1294, Asp1391, and Glu1394 each coordinate Mg(2+). The DRBM domain maps to Thr1439–Gly1507. Cys1451, His1478, Cys1519, and Cys1521 together coordinate Zn(2+).

It belongs to the helicase family. Dicer subfamily. Requires Mg(2+) as cofactor. It depends on Mn(2+) as a cofactor.

Dicer-like endonuclease involved in cleaving double-stranded RNA in the RNA interference (RNAi) pathway. Produces 21 to 25 bp dsRNAs (siRNAs) which target the selective destruction of homologous RNAs leading to sequence-specific suppression of gene expression, called post-transcriptional gene silencing (PTGS). Part of a broad host defense response against viral infection and transposons. This is Dicer-like protein 1 (dcl1) from Aspergillus fumigatus (strain ATCC MYA-4609 / CBS 101355 / FGSC A1100 / Af293) (Neosartorya fumigata).